A 279-amino-acid chain; its full sequence is MVNIGTHVSSSKSLDLVFERGKEVEASSIQFFIRSPRSWAWIERTDEEKERFLQKKNEYKIHPLVVHASYLFNLASFEEELYKKSIESVIQELKLCEELKIDYYVIHAGKSKGNPKKQAIDRILRAFEEIFSRLNLKNTTFLVETLAGQSGEVGATLEEVYTLIEPFENEKIGVCLDTCHIFASGYQINTDEGFNSFKKELIDYNLLEKTKVIHCNDSKAPFNSKKDRHEHIGKGFIGLEGFRIFLNDDDFNKLPFILETPKEGDMDRVNINLLKSLIK.

9 residues coordinate Zn(2+): His67, His107, Glu144, Asp177, His180, His214, Asp227, His229, and Glu259.

It belongs to the AP endonuclease 2 family. Requires Zn(2+) as cofactor.

The catalysed reaction is Endonucleolytic cleavage to 5'-phosphooligonucleotide end-products.. Endonuclease IV plays a role in DNA repair. It cleaves phosphodiester bonds at apurinic or apyrimidinic (AP) sites, generating a 3'-hydroxyl group and a 5'-terminal sugar phosphate. The sequence is that of Probable endonuclease 4 from Sulfurihydrogenibium sp. (strain YO3AOP1).